Here is a 125-residue protein sequence, read N- to C-terminus: Glycine cleavage system H protein (125 aa).

One can recognise a Lipoyl-binding domain in the interval 19 to 101 (EVTVGITDHA…YHEGWLVKLK (83 aa)). The residue at position 60 (lysine 60) is an N6-lipoyllysine.

The protein belongs to the GcvH family. The glycine cleavage system is composed of four proteins: P, T, L and H. (R)-lipoate is required as a cofactor.

The glycine cleavage system catalyzes the degradation of glycine. The H protein shuttles the methylamine group of glycine from the P protein to the T protein. The polypeptide is Glycine cleavage system H protein (Legionella pneumophila (strain Corby)).